The chain runs to 741 residues: 2-5A-dependent ribonuclease (741 aa).

The disordered stretch occupies residues 1–21; the sequence is MESRDHNNPQEGPTSSSGRRA. The span at 9–18 shows a compositional bias: polar residues; it reads PQEGPTSSSG. ANK repeat units follow at residues 24–53, 58–87, 91–120, 124–153, 167–197, 201–234, 238–268, 272–301, and 303–329; these read EDNH…NVNF, GGWT…DPVL, NGAT…DVNE, YGFT…NVNL, GGAT…DVNA, MGRN…DVNV, RGKT…EIND, DGKT…STDC, and DLVM…KEDF. 2-5A binding (P-loop) stretches follow at residues 229-242 and 253-275; these read GADV…GKTP and GLVQ…DGKT. The region spanning 365–586 is the Protein kinase domain; sequence IDEKYKIADT…LSDLLGHPFF (222 aa). The C6-type; atypical zinc finger occupies 395 to 444; the sequence is CEGSPRAQREVSCLQSSRENSHLVTFYGSESHRGHLFVCVTLCEQTLEAC. The region spanning 589-723 is the KEN domain; that stretch reads WESRYRTLRN…KHFPQTHSPN (135 aa). Lys684 is subject to N6-acetyllysine. Residues 715–741 form a disordered region; the sequence is HFPQTHSPNKPQCDGAGGASGLASPGC.

It belongs to the protein kinase superfamily. As to quaternary structure, monomer (inactive form) or homodimer. Interacts with ABCE1; this interaction inhibits the RNASEL. Mn(2+) serves as cofactor. The cofactor is Mg(2+). As to expression, highly expressed in spleen and thymus followed by prostate, testis, uterus, small intestine, colon and peripheral blood leukocytes.

It is found in the cytoplasm. It localises to the mitochondrion. After binding to 2-5A (5'-phosphorylated 2',5'-linked oligoadenylates) the homodimerization and subsequent activation occurs. Inhibited by RNASEL inhibitor ABCE1/RLI, a cytoplasmic member of the ATP-binding cassette (ABC) transporter family. Functionally, endoribonuclease that functions in the interferon (IFN) antiviral response. In INF treated and virus infected cells, RNASEL probably mediates its antiviral effects through a combination of direct cleavage of single-stranded viral RNAs, inhibition of protein synthesis through the degradation of rRNA, induction of apoptosis, and induction of other antiviral genes. RNASEL mediated apoptosis is the result of a JNK-dependent stress-response pathway leading to cytochrome c release from mitochondria and caspase-dependent apoptosis. Therefore, activation of RNASEL could lead to elimination of virus infected cells under some circumstances. In the crosstalk between autophagy and apoptosis proposed to induce autophagy as an early stress response to small double-stranded RNA and at later stages of prolonged stress to activate caspase-dependent proteolytic cleavage of BECN1 to terminate autophagy and promote apoptosis. Might play a central role in the regulation of mRNA turnover. Cleaves 3' of UpNp dimers, with preference for UU and UA sequences, to sets of discrete products ranging from between 4 and 22 nucleotides in length. The chain is 2-5A-dependent ribonuclease (RNASEL) from Homo sapiens (Human).